The following is a 112-amino-acid chain: Osmotically-inducible putative lipoprotein OsmE (112 aa).

An N-terminal signal peptide occupies residues 1–20; the sequence is MNKNMAGILSAAAVLTMLAG. The N-palmitoyl cysteine moiety is linked to residue cysteine 21. Residue cysteine 21 is the site of S-diacylglycerol cysteine attachment.

It localises to the cell inner membrane. In Escherichia coli O157:H7, this protein is Osmotically-inducible putative lipoprotein OsmE (osmE).